A 403-amino-acid polypeptide reads, in one-letter code: Indoleamine 2,3-dioxygenase 1 (403 aa).

His346 serves as a coordination point for heme b. A disordered region spans residues 360-381 (QQPKENKTSEDPSKLEAKGTGG). Residues 363-376 (KENKTSEDPSKLEA) are compositionally biased toward basic and acidic residues.

Belongs to the indoleamine 2,3-dioxygenase family. Monomer. The cofactor is heme b. In terms of tissue distribution, expressed in mature dendritic cells located in lymphoid organs (including lymph nodes, spleen, tonsils, Peyers's patches, the gut lamina propria, and the thymic medulla), in some epithelial cells of the female genital tract, as well as in endothelial cells of term placenta and in lung parenchyma. Weakly or not expressed in most normal tissues, but mostly inducible in most tissues. Expressed in more than 50% of tumors, either by tumoral, stromal, or endothelial cells (expression in tumor is associated with a worse clinical outcome). Not overexpressed in tumor-draining lymph nodes.

The protein localises to the cytoplasm. The protein resides in the cytosol. It catalyses the reaction D-tryptophan + O2 = N-formyl-D-kynurenine. The catalysed reaction is L-tryptophan + O2 = N-formyl-L-kynurenine. It participates in amino-acid degradation; L-tryptophan degradation via kynurenine pathway; L-kynurenine from L-tryptophan: step 1/2. Activity is inhibited by and MTH-trp (methylthiohydantoin-DL-tryptophan), modestly inhibited by L-1MT (1-methyl-L-tryptophan) but not D-1MT (1-methyl-D-tryptophan). Its function is as follows. Catalyzes the first and rate limiting step of the catabolism of the essential amino acid tryptophan along the kynurenine pathway. Involved in the peripheral immune tolerance, contributing to maintain homeostasis by preventing autoimmunity or immunopathology that would result from uncontrolled and overreacting immune responses. Tryptophan shortage inhibits T lymphocytes division and accumulation of tryptophan catabolites induces T-cell apoptosis and differentiation of regulatory T-cells. Acts as a suppressor of anti-tumor immunity. Limits the growth of intracellular pathogens by depriving tryptophan. Protects the fetus from maternal immune rejection. The chain is Indoleamine 2,3-dioxygenase 1 from Homo sapiens (Human).